Consider the following 316-residue polypeptide: Ribosomal protein L11 methyltransferase (316 aa).

Positions 159, 179, 201, and 243 each coordinate S-adenosyl-L-methionine.

The protein belongs to the methyltransferase superfamily. PrmA family.

The protein resides in the cytoplasm. It carries out the reaction L-lysyl-[protein] + 3 S-adenosyl-L-methionine = N(6),N(6),N(6)-trimethyl-L-lysyl-[protein] + 3 S-adenosyl-L-homocysteine + 3 H(+). Methylates ribosomal protein L11. The protein is Ribosomal protein L11 methyltransferase of Gloeobacter violaceus (strain ATCC 29082 / PCC 7421).